A 49-amino-acid polypeptide reads, in one-letter code: Large ribosomal subunit protein bL33A (49 aa).

It belongs to the bacterial ribosomal protein bL33 family.

The protein is Large ribosomal subunit protein bL33A of Staphylococcus haemolyticus (strain JCSC1435).